The primary structure comprises 656 residues: Protein sly1 homolog (656 aa).

4 repeat units span residues 85–121 (DENLDRIQQDFSNGLYDIYHLNFLAPITRSKIENLAA), 203–245 (RNSA…FSFQ), 419–456 (LELLRDAEFGQPEDKLRLYIIYYICAQQLPEPELERLR), and 460–496 (QSAGCDLTALAYVQRWKSIMNRSPSISQATQYEGGGT). The segment at 85 to 496 (DENLDRIQQD…QATQYEGGGT (412 aa)) is 4 X approximate repeats.

This sequence belongs to the STXBP/unc-18/SEC1 family.

Its subcellular location is the cytoplasm. The protein localises to the membrane. Its function is as follows. Non-vital for development. This Drosophila virilis (Fruit fly) protein is Protein sly1 homolog (Slh).